We begin with the raw amino-acid sequence, 120 residues long: Flagellar transcriptional regulator FlhD (120 aa).

It belongs to the FlhD family. In terms of assembly, homodimer; disulfide-linked. Forms a heterohexamer composed of two FlhC and four FlhD subunits. Each FlhC binds a FlhD dimer, forming a heterotrimer, and a hexamer assembles by dimerization of two heterotrimers.

Its subcellular location is the cytoplasm. Its function is as follows. Functions in complex with FlhC as a master transcriptional regulator that regulates transcription of several flagellar and non-flagellar operons by binding to their promoter region. Activates expression of class 2 flagellar genes, including fliA, which is a flagellum-specific sigma factor that turns on the class 3 genes. Also regulates genes whose products function in a variety of physiological pathways. This Erwinia tasmaniensis (strain DSM 17950 / CFBP 7177 / CIP 109463 / NCPPB 4357 / Et1/99) protein is Flagellar transcriptional regulator FlhD.